The primary structure comprises 328 residues: MNLVNLENILDNTSFLVLFLTMMIYWVGAAFPSVPYLQALGTAGVAIANLCIAALLGARWIEAGYFPISNLYESLFFLAWGVTAAHLIAQQMSRSHLVGVVTTPVAMGISAFAALTLPADMQTSAPLVPALKSNWLMMHVSVMMLSYATLMVGSALAIAFLFVTKGQNVELHGSSVGTGGYRTGVRLNKPQPVQETAIEGSGNVAVLNTTVVSDAPSLSLQRLSIADTLDNISYRIIGLGFPLLTIGIIAGAVWANEAWGSYWSWDPKETWALITWLVFAAYLHARITKGWQGRKPAILAASGFVVVWVCYLGVNLLGKGLHSYGWFF.

8 consecutive transmembrane segments (helical) span residues 15-35, 37-57, 68-88, 97-117, 142-162, 236-256, 271-291, and 297-317; these read FLVL…PSVP, LQAL…ALLG, ISNL…AHLI, LVGV…ALTL, VMML…AFLF, IIGL…VWAN, WALI…TKGW, and AILA…VNLL.

Belongs to the CcmF/CycK/Ccl1/NrfE/CcsA family. As to quaternary structure, may interact with ccs1.

It localises to the cellular thylakoid membrane. In terms of biological role, required during biogenesis of c-type cytochromes (cytochrome c6 and cytochrome f) at the step of heme attachment. The sequence is that of Cytochrome c biogenesis protein CcsA from Gloeothece citriformis (strain PCC 7424) (Cyanothece sp. (strain PCC 7424)).